We begin with the raw amino-acid sequence, 228 residues long: UPF0173 metal-dependent hydrolase lin1612 (228 aa).

This sequence belongs to the UPF0173 family.

In Listeria innocua serovar 6a (strain ATCC BAA-680 / CLIP 11262), this protein is UPF0173 metal-dependent hydrolase lin1612.